A 156-amino-acid chain; its full sequence is Small ribosomal subunit protein uS7 (156 aa).

Belongs to the universal ribosomal protein uS7 family. In terms of assembly, part of the 30S ribosomal subunit. Contacts proteins S9 and S11.

Its function is as follows. One of the primary rRNA binding proteins, it binds directly to 16S rRNA where it nucleates assembly of the head domain of the 30S subunit. Is located at the subunit interface close to the decoding center, probably blocks exit of the E-site tRNA. The polypeptide is Small ribosomal subunit protein uS7 (Aster yellows witches'-broom phytoplasma (strain AYWB)).